Here is a 264-residue protein sequence, read N- to C-terminus: 3-methyl-2-oxobutanoate hydroxymethyltransferase (264 aa).

Positions 45 and 84 each coordinate Mg(2+). 3-methyl-2-oxobutanoate contacts are provided by residues 45 to 46 (DS), D84, and K112. E114 is a binding site for Mg(2+). The active-site Proton acceptor is the E181.

It belongs to the PanB family. In terms of assembly, homodecamer; pentamer of dimers. The cofactor is Mg(2+).

The protein localises to the cytoplasm. It catalyses the reaction 3-methyl-2-oxobutanoate + (6R)-5,10-methylene-5,6,7,8-tetrahydrofolate + H2O = 2-dehydropantoate + (6S)-5,6,7,8-tetrahydrofolate. Its pathway is cofactor biosynthesis; (R)-pantothenate biosynthesis; (R)-pantoate from 3-methyl-2-oxobutanoate: step 1/2. In terms of biological role, catalyzes the reversible reaction in which hydroxymethyl group from 5,10-methylenetetrahydrofolate is transferred onto alpha-ketoisovalerate to form ketopantoate. This is 3-methyl-2-oxobutanoate hydroxymethyltransferase from Aeromonas hydrophila subsp. hydrophila (strain ATCC 7966 / DSM 30187 / BCRC 13018 / CCUG 14551 / JCM 1027 / KCTC 2358 / NCIMB 9240 / NCTC 8049).